Here is a 182-residue protein sequence, read N- to C-terminus: Phospholipase A2 inhibitor gamma subunit A (182 aa).

Intrachain disulfides connect Cys-3–Cys-27, Cys-6–Cys-13, Cys-20–Cys-48, Cys-54–Cys-75, Cys-76–Cys-81, Cys-99–Cys-124, Cys-117–Cys-146, and Cys-150–Cys-172. Residue Asn-157 is glycosylated (N-linked (GlcNAc...) asparagine).

The protein belongs to the CNF-like-inhibitor family. Heterotrimer of 2 subunits A and 1 subunit B. N-glycosylation is not important for activity, since deglycosylation does not change its PLA2 inhibitory activity. In terms of tissue distribution, expressed by the liver.

It localises to the secreted. Strongly inhibits its own venom PLA2 and all other PLA2s tested including Elapid, Crotalid and Viperid venom PLA2s, as well as honeybee PLA2s. The sequence is that of Phospholipase A2 inhibitor gamma subunit A from Laticauda semifasciata (Black-banded sea krait).